The sequence spans 160 residues: Cytochrome b6-f complex subunit 4 (160 aa).

A run of 3 helical transmembrane segments spans residues leucine 36 to valine 56, leucine 95 to glutamate 115, and alanine 131 to isoleucine 151.

The protein belongs to the cytochrome b family. PetD subfamily. In terms of assembly, the 4 large subunits of the cytochrome b6-f complex are cytochrome b6, subunit IV (17 kDa polypeptide, PetD), cytochrome f and the Rieske protein, while the 4 small subunits are PetG, PetL, PetM and PetN. The complex functions as a dimer.

The protein resides in the cellular thylakoid membrane. Its function is as follows. Component of the cytochrome b6-f complex, which mediates electron transfer between photosystem II (PSII) and photosystem I (PSI), cyclic electron flow around PSI, and state transitions. The chain is Cytochrome b6-f complex subunit 4 from Rippkaea orientalis (strain PCC 8801 / RF-1) (Cyanothece sp. (strain PCC 8801)).